Here is a 94-residue protein sequence, read N- to C-terminus: Na(+)/H(+) antiporter subunit F (94 aa).

3 helical membrane-spanning segments follow: residues Phe2–Ile22, Val34–Leu54, and Ala59–Ser79.

The protein belongs to the CPA3 antiporters (TC 2.A.63) subunit F family. In terms of assembly, forms a heterooligomeric complex that consists of seven subunits: MrpA, MrpB, MrpC, MrpD, MrpE, MrpF and MrpG.

The protein resides in the cell membrane. Mrp complex is a Na(+)/H(+) antiporter that is considered to be the major Na(+) excretion system in B.subtilis. Has a major role in Na(+) resistance and a minor role in Na(+)- and K(+)-dependent pH homeostasis as compared to TetB. MrpA may be the actual Na(+)/H(+) antiporter, although the six other Mrp proteins are all required for Na(+)/H(+) antiport activity and Na(+) resistance. MrpA is required for initiation of sporulation when external Na(+) concentration increases. Also transports Li(+) but not K(+), Ca(2+) or Mg(2+). Its function is as follows. Involved in cholate and Na(+) efflux activities, which may be mechanistically coupled. Does not require other Mrp proteins for its own function. The polypeptide is Na(+)/H(+) antiporter subunit F (mrpF) (Bacillus subtilis (strain 168)).